We begin with the raw amino-acid sequence, 116 residues long: Prefoldin subunit beta (116 aa).

The protein belongs to the prefoldin subunit beta family. Heterohexamer of two alpha and four beta subunits.

It localises to the cytoplasm. Its function is as follows. Molecular chaperone capable of stabilizing a range of proteins. Seems to fulfill an ATP-independent, HSP70-like function in archaeal de novo protein folding. The sequence is that of Prefoldin subunit beta from Methanobrevibacter smithii (strain ATCC 35061 / DSM 861 / OCM 144 / PS).